Here is a 394-residue protein sequence, read N- to C-terminus: Galactose-3-O-sulfotransferase 2 (394 aa).

Residues 1–8 are Cytoplasmic-facing; the sequence is MWGSQHRS. Residues 9–29 form a helical; Signal-anchor for type II membrane protein membrane-spanning segment; that stretch reads FQVALWFLVLAVFLLVGFLHV. Over 30–394 the chain is Lumenal; sequence DFRLLIPDKV…TPKDIPFLKK (365 aa). 4 N-linked (GlcNAc...) asparagine glycosylation sites follow: asparagine 72, asparagine 176, asparagine 284, and asparagine 326.

It belongs to the galactose-3-O-sulfotransferase family.

It localises to the golgi apparatus. The protein localises to the golgi stack membrane. It participates in protein modification; carbohydrate sulfation. Strongly inhibited by Cu(2+) and Zn(2+). Transfers a sulfate group to the hydroxyl group at C3 of non-reducing beta-galactosyl residues. Acts both on type 1 (Gal-beta-1,3-GlcNAc) and type 2 (Gal-beta-1,4-GlcNAc) chains with similar efficiency. This is Galactose-3-O-sulfotransferase 2 (Gal3st2) from Mus musculus (Mouse).